A 131-amino-acid chain; its full sequence is Large ribosomal subunit protein bL12 (131 aa).

This sequence belongs to the bacterial ribosomal protein bL12 family. In terms of assembly, homodimer. Part of the ribosomal stalk of the 50S ribosomal subunit. Forms a multimeric L10(L12)X complex, where L10 forms an elongated spine to which 2 to 4 L12 dimers bind in a sequential fashion. Binds GTP-bound translation factors.

Forms part of the ribosomal stalk which helps the ribosome interact with GTP-bound translation factors. Is thus essential for accurate translation. This chain is Large ribosomal subunit protein bL12, found in Prochlorococcus marinus (strain MIT 9301).